Consider the following 518-residue polypeptide: Prosaposin (518 aa).

The N-terminal stretch at 1-17 is a signal peptide; the sequence is MARRLLTLLGLLAAAVA. A propeptide spanning residues 18–60 is cleaved from the precursor; that stretch reads SPVLWQKDCAKGPEVWCQSLRTASQCGAVKHCQQNVWSKPAVN. Residues 19–59 enclose the Saposin A-type 1 domain; it reads PVLWQKDCAKGPEVWCQSLRTASQCGAVKHCQQNVWSKPAV. 4 consecutive Saposin B-type domains span residues 60–143, 193–277, 307–388, and 399–480; these read NSIP…QSLQ, TEDV…PSVK, TFSV…AANK, and AGGF…GAAK. 3 cysteine pairs are disulfide-bonded: Cys-64/Cys-139, Cys-67/Cys-133, and Cys-95/Cys-107. The N-linked (GlcNAc...) asparagine glycan is linked to Asn-81. A propeptide spanning residues 144–193 is cleaved from the precursor; that stretch reads KHLAAMKLQKQLQSNKIPELDFSELTSPFMANVPLLLYPQDKPKQKSKAT. 3 disulfide bridges follow: Cys-197–Cys-273, Cys-200–Cys-267, and Cys-229–Cys-240. N-linked (GlcNAc...) asparagine glycosylation occurs at Asn-214. Residues 277 to 306 constitute a propeptide that is removed on maturation; sequence KSVPLQTLVPAQVVHEVKMETVEKATVQEK. Cystine bridges form between Cys-311-Cys-384, Cys-314-Cys-378, and Cys-342-Cys-353. An N-linked (GlcNAc...) asparagine glycan is attached at Asn-328. Residues 388–398 constitute a propeptide that is removed on maturation; it reads KPPQQPVVVKP. 3 disulfide bridges follow: Cys-403/Cys-476, Cys-406/Cys-470, and Cys-434/Cys-445. N-linked (GlcNAc...) asparagine glycosylation is present at Asn-420. Residues 480–518 constitute a propeptide that is removed on maturation; that stretch reads KKPLLGEDACVWGPGYWCKNMETAAQCNAVDHCRRHVWN. A Saposin A-type 2 domain is found at 482-518; sequence PLLGEDACVWGPGYWCKNMETAAQCNAVDHCRRHVWN.

As to quaternary structure, saposin-B is a homodimer. Post-translationally, this precursor is proteolytically processed to 4 small peptides, which are similar to each other and are sphingolipid hydrolase activator proteins.

It is found in the lysosome. The protein resides in the secreted. Its function is as follows. The lysosomal degradation of sphingolipids takes place by the sequential action of specific hydrolases. Some of these enzymes require specific low-molecular mass, non-enzymatic proteins: the sphingolipids activator proteins (coproteins). Saposin-A and saposin-C stimulate the hydrolysis of glucosylceramide by beta-glucosylceramidase (EC 3.2.1.45) and galactosylceramide by beta-galactosylceramidase (EC 3.2.1.46). Saposin-C apparently acts by combining with the enzyme and acidic lipid to form an activated complex, rather than by solubilizing the substrate. In terms of biological role, saposin-B stimulates the hydrolysis of galacto-cerebroside sulfate by arylsulfatase A (EC 3.1.6.8), GM1 gangliosides by beta-galactosidase (EC 3.2.1.23) and globotriaosylceramide by alpha-galactosidase A (EC 3.2.1.22). Saposin-B forms a solubilizing complex with the substrates of the sphingolipid hydrolases. Functionally, saposin-D is a specific sphingomyelin phosphodiesterase activator (EC 3.1.4.12). The chain is Prosaposin (PSAP) from Gallus gallus (Chicken).